A 786-amino-acid chain; its full sequence is Ciliated left-right organizer ZP-N domains-containing protein (786 aa).

An N-terminal signal peptide occupies residues 1-18; the sequence is MWGSVAVVWAICLACIQP.

In terms of tissue distribution, expressed specifically by cells of the ciliated left-right organizer.

Functionally, plays a role in left-right patterning process. The polypeptide is Ciliated left-right organizer ZP-N domains-containing protein (Ciroz) (Mus musculus (Mouse)).